Reading from the N-terminus, the 98-residue chain is Feather beta keratin (98 aa).

Serine 2 is modified (N-acetylserine).

It belongs to the avian keratin family. In terms of assembly, the avian keratins (F-ker, S-ker, C-ker and B-ker) are a complex mixture of very similar polypeptides.

In Cathartes aura (Turkey vulture), this protein is Feather beta keratin.